Consider the following 247-residue polypeptide: E3 ubiquitin-protein ligase RNF182 (247 aa).

The segment at 20–68 (CKICYNRYNLKQRKPKVLECCHRVCAKCLYKIIDFGDSPQGVIVCPFCR) adopts an RING-type zinc-finger fold. A run of 2 helical transmembrane segments spans residues 184 to 204 (VLVW…IYLL) and 211 to 231 (LGVV…VYGF).

As to quaternary structure, interacts with ATP6V0C.

It localises to the membrane. The protein localises to the cytoplasm. It catalyses the reaction S-ubiquitinyl-[E2 ubiquitin-conjugating enzyme]-L-cysteine + [acceptor protein]-L-lysine = [E2 ubiquitin-conjugating enzyme]-L-cysteine + N(6)-ubiquitinyl-[acceptor protein]-L-lysine.. Its pathway is protein modification; protein ubiquitination. E3 ubiquitin-protein ligase that mediates the ubiquitination of ATP6V0C and targets it to degradation via the ubiquitin-proteasome pathway. Also plays a role in the inhibition of TLR-triggered innate immune response by mediating 'Lys'-48-linked ubiquitination and subsequent degradation of NF-kappa-B component RELA. The polypeptide is E3 ubiquitin-protein ligase RNF182 (Rnf182) (Rattus norvegicus (Rat)).